The sequence spans 81 residues: Photosystem I iron-sulfur center (81 aa).

4Fe-4S ferredoxin-type domains are found at residues 2 to 31 (AHSVKIYDTCIGCTQCVRACPTDVLEMIPW) and 39 to 68 (IASAPRTEDCVGCKRCESACPTDFLSVRVY). [4Fe-4S] cluster-binding residues include Cys11, Cys14, Cys17, Cys21, Cys48, Cys51, Cys54, and Cys58.

In terms of assembly, the eukaryotic PSI reaction center is composed of at least 11 subunits. It depends on [4Fe-4S] cluster as a cofactor.

It localises to the plastid. Its subcellular location is the chloroplast thylakoid membrane. It carries out the reaction reduced [plastocyanin] + hnu + oxidized [2Fe-2S]-[ferredoxin] = oxidized [plastocyanin] + reduced [2Fe-2S]-[ferredoxin]. Its function is as follows. Apoprotein for the two 4Fe-4S centers FA and FB of photosystem I (PSI); essential for photochemical activity. FB is the terminal electron acceptor of PSI, donating electrons to ferredoxin. The C-terminus interacts with PsaA/B/D and helps assemble the protein into the PSI complex. Required for binding of PsaD and PsaE to PSI. PSI is a plastocyanin-ferredoxin oxidoreductase, converting photonic excitation into a charge separation, which transfers an electron from the donor P700 chlorophyll pair to the spectroscopically characterized acceptors A0, A1, FX, FA and FB in turn. This Cycas taitungensis (Prince sago) protein is Photosystem I iron-sulfur center.